The primary structure comprises 143 residues: Pre-mRNA-splicing factor U5-Cwc21 (143 aa).

One can recognise a CWF21 domain in the interval 27–70 (EHHRSLRAIKLKVLLYREEREAAGVPPDVISRECATLHGSLLRN).

Belongs to the CWC21 family. In terms of assembly, associates with the NTC complex (or PRP19-associated complex). The NTC complex associates with the spliceosome after the release of the U1 and U4 snRNAs and forms the CWC spliceosome subcomplex reminiscent of a late-stage spliceosome. Associates specifically with U5-containing snRNPs.

The protein resides in the cytoplasm. It is found in the nucleus. Essential protein involved in pre-mRNA cis- and trans-splicing. May function at or prior to the first catalytic step of splicing at the catalytic center of the spliceosome. May do so by stabilizing the catalytic center or the position of the RNA substrate. The chain is Pre-mRNA-splicing factor U5-Cwc21 from Trypanosoma brucei brucei (strain 927/4 GUTat10.1).